A 392-amino-acid chain; its full sequence is Na(+)/H(+) antiporter NhaA (392 aa).

A run of 11 helical transmembrane segments spans residues Ile16 to Ala36, Leu58 to Val78, Ile93 to Leu113, Gly124 to Gly144, Ile153 to Phe173, Thr176 to Met196, Met199 to Leu219, Asp257 to Val277, Val295 to Ile315, Trp328 to Val348, and Ala362 to Leu382.

This sequence belongs to the NhaA Na(+)/H(+) (TC 2.A.33) antiporter family.

The protein resides in the cell inner membrane. The enzyme catalyses Na(+)(in) + 2 H(+)(out) = Na(+)(out) + 2 H(+)(in). In terms of biological role, na(+)/H(+) antiporter that extrudes sodium in exchange for external protons. This Sulfurovum sp. (strain NBC37-1) protein is Na(+)/H(+) antiporter NhaA.